The following is a 616-amino-acid chain: Glycogenin-1 (616 aa).

UDP-binding residues include Leu-10, Tyr-16, and Arg-95. UDP-alpha-D-glucose is bound by residues Leu-10, Tyr-16, Arg-95, Lys-104, Asp-120, Asp-122, Asn-158, Ser-159, Asp-185, Asp-188, and Gln-189. UDP-binding residues include Asp-120 and Asp-122. Asp-120 and Asp-122 together coordinate Mn(2+). O-linked (Glc...) tyrosine glycosylation occurs at Tyr-230. UDP contacts are provided by His-247, Gly-250, and Lys-253. His-247 lines the Mn(2+) pocket. Positions 250 and 253 each coordinate UDP-alpha-D-glucose. Residues 283-302 are compositionally biased toward basic and acidic residues; that stretch reads HQLNNEVSKPKISDSDKTET. Disordered regions lie at residues 283–320, 335–354, 371–525, and 553–588; these read HQLN…PTTN, NQNA…NPVP, TNQP…EKDK, and RDAT…EMPN. The segment covering 377 to 386 has biased composition (basic and acidic residues); that stretch reads ESREYSKEND. The segment covering 400 to 419 has biased composition (polar residues); sequence SPPNSTQELNSSYSVVSTQA. Residues 450–461 show a composition bias toward low complexity; it reads STAASSNNNVSN. Polar residues-rich tracts occupy residues 462–485 and 492–503; these read QPDG…PSNP and DNIQKPSVSTND. Basic and acidic residues predominate over residues 567–576; that stretch reads DKQEDMKLTA. Polar residues predominate over residues 577-586; that stretch reads EETNQPQQEM. The O-linked (Glc...) tyrosine glycan is linked to Tyr-598.

It belongs to the glycosyltransferase 8 family. Glycogenin subfamily. Mn(2+) is required as a cofactor.

The protein localises to the cytoplasm. It is found in the vacuole. The catalysed reaction is L-tyrosyl-[glycogenin] + UDP-alpha-D-glucose = alpha-D-glucosyl-L-tyrosyl-[glycogenin] + UDP + H(+). It carries out the reaction [1,4-alpha-D-glucosyl](n)-L-tyrosyl-[glycogenin] + UDP-alpha-D-glucose = [1,4-alpha-D-glucosyl](n+1)-L-tyrosyl-[glycogenin] + UDP + H(+). Functionally, self-glucosylating initiator of glycogen synthesis. It catalyzes the formation of a short alpha (1,4)-glucosyl chain covalently attached via a glucose 1-O-tyrosyl linkage to internal tyrosine residues and these chains act as primers for the elongation reaction catalyzed by glycogen synthase. Capable of transferring glucosyl residues to unbound acceptors such as free oligoglucans or oligoglucan derivatives. This Saccharomyces cerevisiae (strain ATCC 204508 / S288c) (Baker's yeast) protein is Glycogenin-1.